We begin with the raw amino-acid sequence, 274 residues long: MVLTHSSPDLLTIGKRNFHSRLFAGTGKYPSLKVMQESLRSSGCEMVTVAVRRVQTMASGHAGLIEAIDWSKIWMLPNTAGCATAEEAIRVARLGRELAKLAGQEDNKFVKLEVIPDSRYLLPDPFGTLEAAEQLVKEGFEVLPYINADPLLAKRLEEVGCATVMPLGSPIGSGQGLRNAANISLIIENARVPVVVDAGIGVPSEAAQALEMGADAVLVNSAIALAGDPITMAEAMRWAIQAGRQAYRSGRLPERAAASPSSPTTGIIAEAKTK.

K111 (schiff-base intermediate with DXP) is an active-site residue. Residues G172, 198–199 (AG), and 220–221 (NS) each bind 1-deoxy-D-xylulose 5-phosphate. A disordered region spans residues 251–274 (RLPERAAASPSSPTTGIIAEAKTK).

It belongs to the ThiG family. As to quaternary structure, homotetramer. Forms heterodimers with either ThiH or ThiS.

It localises to the cytoplasm. The enzyme catalyses [ThiS sulfur-carrier protein]-C-terminal-Gly-aminoethanethioate + 2-iminoacetate + 1-deoxy-D-xylulose 5-phosphate = [ThiS sulfur-carrier protein]-C-terminal Gly-Gly + 2-[(2R,5Z)-2-carboxy-4-methylthiazol-5(2H)-ylidene]ethyl phosphate + 2 H2O + H(+). It participates in cofactor biosynthesis; thiamine diphosphate biosynthesis. Catalyzes the rearrangement of 1-deoxy-D-xylulose 5-phosphate (DXP) to produce the thiazole phosphate moiety of thiamine. Sulfur is provided by the thiocarboxylate moiety of the carrier protein ThiS. In vitro, sulfur can be provided by H(2)S. The polypeptide is Thiazole synthase (Prochlorococcus marinus (strain MIT 9313)).